A 431-amino-acid chain; its full sequence is MQDFKSLGLSRWLVESLNAMRITHPTAIQKHCIPEILKGRDCIGGAKTGSGKTIAFAGPMLSQWSDDPSGMFGVVLTPTRELAIQIAEQFTALGSSMNIRVCLVVGGESIVKQALELQKKPHFIIATPGRLAHHILSSGEEVVGGLSRVKYLVLDEADLILTQTFAADLSTCIAKLPPKQKRQTLLFTATITDQVRALQNAPAQDSKPPLFAYEVENVDNVAVPSTLKLEYLLVPEHVKEAYLYQLLTCEDYKDSSVIVFVNRTTAAEVLRRTLRSLEVRVASLHSQMPQSERINSLQRFRANAARVLIATDVAARGLDIPTVELVINYDIPQDPDTFIHRSGRTARAGRSGDAISFVTPRDVSRIEAIEERINKKMDECKKVHDTAVIRKALTKVTKAKRESLMDMEKANFGEKRKTQKKKNLAEKSLRA.

Residues 2-30 carry the Q motif motif; that stretch reads QDFKSLGLSRWLVESLNAMRITHPTAIQK. The 177-residue stretch at 33–209 folds into the Helicase ATP-binding domain; it reads IPEILKGRDC…NAPAQDSKPP (177 aa). 46–53 lines the ATP pocket; that stretch reads AKTGSGKT. Residues 155–158 carry the DEAD box motif; the sequence is DEAD. The Helicase C-terminal domain maps to 242 to 389; sequence YLYQLLTCED…CKKVHDTAVI (148 aa). Positions 406–416 are enriched in basic and acidic residues; it reads DMEKANFGEKR. Residues 406-431 form a disordered region; the sequence is DMEKANFGEKRKTQKKKNLAEKSLRA.

Belongs to the DEAD box helicase family. DDX49/DBP8 subfamily.

The protein localises to the nucleus. The protein resides in the nucleolus. The enzyme catalyses ATP + H2O = ADP + phosphate + H(+). Its function is as follows. ATP-binding RNA helicase involved in 40S ribosomal subunit biogenesis and is required for the normal formation of 18S rRNAs through pre-rRNA processing at A0, A1 and A2 sites. Required for vegetative growth. In Vanderwaltozyma polyspora (strain ATCC 22028 / DSM 70294 / BCRC 21397 / CBS 2163 / NBRC 10782 / NRRL Y-8283 / UCD 57-17) (Kluyveromyces polysporus), this protein is ATP-dependent RNA helicase DBP8 (DBP8).